Consider the following 160-residue polypeptide: Transcription elongation factor GreB (160 aa).

It belongs to the GreA/GreB family. GreB subfamily.

Necessary for efficient RNA polymerase transcription elongation past template-encoded arresting sites. The arresting sites in DNA have the property of trapping a certain fraction of elongating RNA polymerases that pass through, resulting in locked ternary complexes. Cleavage of the nascent transcript by cleavage factors such as GreA or GreB allows the resumption of elongation from the new 3'terminus. GreB releases sequences of up to 9 nucleotides in length. This Vibrio vulnificus (strain YJ016) protein is Transcription elongation factor GreB.